An 86-amino-acid polypeptide reads, in one-letter code: Neurotoxin-like protein pMD18-NTL1/2/4/5 (86 aa).

The N-terminal stretch at 1–21 (MKTLLLTLVVLTIACLDLGYT) is a signal peptide. Disulfide bonds link cysteine 24/cysteine 45, cysteine 38/cysteine 62, cysteine 66/cysteine 78, and cysteine 79/cysteine 84.

Belongs to the three-finger toxin family. Short-chain subfamily. Orphan group IX sub-subfamily. Expressed by the venom gland.

It localises to the secreted. The chain is Neurotoxin-like protein pMD18-NTL1/2/4/5 from Bungarus multicinctus (Many-banded krait).